The following is a 341-amino-acid chain: 33 kDa chaperonin (341 aa).

Intrachain disulfides connect C245/C247 and C278/C281.

Belongs to the HSP33 family. Under oxidizing conditions two disulfide bonds are formed involving the reactive cysteines. Under reducing conditions zinc is bound to the reactive cysteines and the protein is inactive.

It is found in the cytoplasm. In terms of biological role, redox regulated molecular chaperone. Protects both thermally unfolding and oxidatively damaged proteins from irreversible aggregation. Plays an important role in the bacterial defense system toward oxidative stress. This chain is 33 kDa chaperonin, found in Thermus thermophilus (strain ATCC BAA-163 / DSM 7039 / HB27).